Reading from the N-terminus, the 223-residue chain is Kinetochore protein Spc25 (223 aa).

Residues 65-115 (LRCGELEKRANFMEELTQELEATKQRNLVMRDQIKQLNVLARQHRNEVMES) are a coiled coil.

The protein belongs to the SPC25 family. As to quaternary structure, component of the Ndc80 complex, which is composed of Ndc80, Nuf2 and Spc25.

The protein localises to the nucleus. Its subcellular location is the chromosome. The protein resides in the centromere. It is found in the kinetochore. Acts as a component of the essential kinetochore-associated Ndc80 complex, which is required for chromosome segregation and spindle checkpoint activity during meiosis and mitosis. Required for kinetochore integrity and the organization of stable microtubule binding sites in the outer plate of the kinetochore. Participates in SAC signaling that responds specifically to disruptions in spindle microtubule dynamics. The NDC80 complex synergistically enhances the affinity of the SKA1 complex for microtubules and may allow the NDC80 complex to track depolymerizing microtubules. The polypeptide is Kinetochore protein Spc25 (Drosophila lutescens (Fruit fly)).